The sequence spans 296 residues: Nucleotide-binding protein SZO_12220 (296 aa).

Residue 13–20 participates in ATP binding; it reads GMSGAGKT. 63–66 provides a ligand contact to GTP; sequence DMRS.

Belongs to the RapZ-like family.

In terms of biological role, displays ATPase and GTPase activities. In Streptococcus equi subsp. zooepidemicus (strain H70), this protein is Nucleotide-binding protein SZO_12220.